Reading from the N-terminus, the 581-residue chain is Fibrous sheath-interacting protein 1 (581 aa).

Residues 1 to 77 (MDIIKGNLDG…SNDDKQESCS (77 aa)) form a disordered region. Polar residues predominate over residues 14–30 (PASNSRIRPGSRSSNAS). Basic and acidic residues predominate over residues 52-77 (GKEDHSESSNTENRRTSNDDKQESCS). The residue at position 87 (S87) is a Phosphoserine. Positions 105–153 (EPKLKELDSQLQDAIQKMKKLDKILAKKQRREKEIKKQGLEMRIKLWEE) form a coiled coil. Disordered regions lie at residues 338 to 365 (SSFS…VTPG) and 555 to 581 (HLKL…CKEP). Composition is skewed to basic and acidic residues over residues 344–360 (LENR…ERNM) and 569–581 (QETK…CKEP).

Belongs to the FSIP1 family.

This chain is Fibrous sheath-interacting protein 1 (FSIP1), found in Homo sapiens (Human).